The chain runs to 243 residues: 5'-methylthioadenosine/S-adenosylhomocysteine nucleosidase (243 aa).

E12 serves as the catalytic Proton acceptor. Substrate-binding positions include G78, M158, and 179–180 (ME). The active-site Proton donor is D203.

It belongs to the PNP/UDP phosphorylase family. MtnN subfamily.

It carries out the reaction S-adenosyl-L-homocysteine + H2O = S-(5-deoxy-D-ribos-5-yl)-L-homocysteine + adenine. The enzyme catalyses S-methyl-5'-thioadenosine + H2O = 5-(methylsulfanyl)-D-ribose + adenine. The catalysed reaction is 5'-deoxyadenosine + H2O = 5-deoxy-D-ribose + adenine. The protein operates within amino-acid biosynthesis; L-methionine biosynthesis via salvage pathway; S-methyl-5-thio-alpha-D-ribose 1-phosphate from S-methyl-5'-thioadenosine (hydrolase route): step 1/2. Functionally, catalyzes the irreversible cleavage of the glycosidic bond in both 5'-methylthioadenosine (MTA) and S-adenosylhomocysteine (SAH/AdoHcy) to adenine and the corresponding thioribose, 5'-methylthioribose and S-ribosylhomocysteine, respectively. Also cleaves 5'-deoxyadenosine, a toxic by-product of radical S-adenosylmethionine (SAM) enzymes, into 5-deoxyribose and adenine. This Colwellia psychrerythraea (strain 34H / ATCC BAA-681) (Vibrio psychroerythus) protein is 5'-methylthioadenosine/S-adenosylhomocysteine nucleosidase.